Here is a 278-residue protein sequence, read N- to C-terminus: uncharacterized protein (278 aa).

Residues 1–11 (MMIHIHQDKKM) are compositionally biased toward basic and acidic residues. Disordered regions lie at residues 1-107 (MMIH…RYFK) and 206-278 (KVSA…KASR). Low complexity predominate over residues 62-94 (KQSGGKNAKSGSKSAKSGSKSAKSGSKTSKTQS). The span at 97–107 (KGDESRDRYFK) shows a compositional bias: basic and acidic residues. Residues 249–260 (SAKNAKSTGNKK) are compositionally biased toward polar residues. The segment covering 264-278 (KSAGAKKAPAAKASR) has biased composition (low complexity).

This is an uncharacterized protein from Acanthamoeba polyphaga mimivirus (APMV).